A 799-amino-acid chain; its full sequence is Histidine biosynthesis trifunctional protein (799 aa).

Positions 1 to 229 are phosphoribosyl-AMP cyclohydrolase; the sequence is MVLPILPLID…FIVEQENVGF (229 aa). The phosphoribosyl-ATP pyrophosphohydrolase stretch occupies residues 230-312; the sequence is CHLETMSCFG…FYFALAKLVT (83 aa). Positions 313-799 are histidinol dehydrogenase; the sequence is NNVSLKDVEN…KLGLIPKDFQ (487 aa). Residues Q618 and H621 each contribute to the Zn(2+) site. Catalysis depends on residues E687 and H688. Residues D721 and H780 each coordinate Zn(2+).

The protein in the C-terminal section; belongs to the histidinol dehydrogenase family. Zn(2+) serves as cofactor.

It catalyses the reaction 1-(5-phospho-beta-D-ribosyl)-5'-AMP + H2O = 1-(5-phospho-beta-D-ribosyl)-5-[(5-phospho-beta-D-ribosylamino)methylideneamino]imidazole-4-carboxamide. The enzyme catalyses 1-(5-phospho-beta-D-ribosyl)-ATP + H2O = 1-(5-phospho-beta-D-ribosyl)-5'-AMP + diphosphate + H(+). It carries out the reaction L-histidinol + 2 NAD(+) + H2O = L-histidine + 2 NADH + 3 H(+). It participates in amino-acid biosynthesis; L-histidine biosynthesis; L-histidine from 5-phospho-alpha-D-ribose 1-diphosphate: step 2/9. The protein operates within amino-acid biosynthesis; L-histidine biosynthesis; L-histidine from 5-phospho-alpha-D-ribose 1-diphosphate: step 3/9. Its pathway is amino-acid biosynthesis; L-histidine biosynthesis; L-histidine from 5-phospho-alpha-D-ribose 1-diphosphate: step 9/9. This Saccharomyces bayanus (Yeast) protein is Histidine biosynthesis trifunctional protein (HIS4).